The sequence spans 261 residues: tRNA U34 carboxymethyltransferase (261 aa).

Carboxy-S-adenosyl-L-methionine-binding positions include K25, W39, K44, G63, V114–E115, Y135, and R250.

The protein belongs to the class I-like SAM-binding methyltransferase superfamily. CmoB family. As to quaternary structure, homotetramer.

The catalysed reaction is carboxy-S-adenosyl-L-methionine + 5-hydroxyuridine(34) in tRNA = 5-carboxymethoxyuridine(34) in tRNA + S-adenosyl-L-homocysteine + H(+). Its function is as follows. Catalyzes carboxymethyl transfer from carboxy-S-adenosyl-L-methionine (Cx-SAM) to 5-hydroxyuridine (ho5U) to form 5-carboxymethoxyuridine (cmo5U) at position 34 in tRNAs. In Helicobacter pylori (strain P12), this protein is tRNA U34 carboxymethyltransferase.